The following is a 906-amino-acid chain: Kinesin-like protein KIN-7G (906 aa).

The Kinesin motor domain maps to 26-344; it reads SVAVAVRFRP…LKFAHRAKHI (319 aa). Residue 105 to 112 coordinates ATP; that stretch reads GVTSSGKT. 3 coiled-coil regions span residues 346–385, 733–814, and 839–875; these read IQATQNKIMDARSLIKKYQNEIRQLKEELEQLRRSIRTGT, SDEF…GRNQ, and GDMNALEAMLKEKDQRQAELHTKIEESKQKEAFLEKE. The interval 803–840 is disordered; the sequence is RLSSELASGRNQRRGSHGPRGARRESHTKRYEPARRGD. Residues 813-823 are compositionally biased toward basic residues; that stretch reads NQRRGSHGPRG. Residues 824 to 840 are compositionally biased toward basic and acidic residues; that stretch reads ARRESHTKRYEPARRGD.

This sequence belongs to the TRAFAC class myosin-kinesin ATPase superfamily. Kinesin family. KIN-7 subfamily.

The chain is Kinesin-like protein KIN-7G from Oryza sativa subsp. japonica (Rice).